The primary structure comprises 354 residues: MLKNDRLLRALNRQPVDRTPVWLMRQAGRYLPEYRATRARAGSFLSMAKNPDIACEVTLQPLQRFPLDAAILFSDILTIPDAMGLELYFVEGEGPKFRHPVRDAAAIHRLGVPDMETELRYVMDAVRVIRRELDGSVPLIGFSGSPWTLACYMIEGGGSKEYARIKAMAFNAPEVLHHLLGTVTDAVIAYLAAQRAAGAQALQVFDTWGGVLSPAMYHEFSLPYLTRIAHELERGEGAERTPLVLFGKGNGVYVADLAASGAEAVGVDWTISLADAAQRAGGRVALQGNLDPATLYGSPEAIRTEVGKTLDSYAQGNGGSREGHVFNLGHGMSPDMNPEHVGVLVEAVQRLSKR.

Substrate-binding positions include 25–29 (RQAGR), Asp-75, Tyr-152, Thr-207, and His-330.

It belongs to the uroporphyrinogen decarboxylase family. Homodimer.

Its subcellular location is the cytoplasm. It catalyses the reaction uroporphyrinogen III + 4 H(+) = coproporphyrinogen III + 4 CO2. It participates in porphyrin-containing compound metabolism; protoporphyrin-IX biosynthesis; coproporphyrinogen-III from 5-aminolevulinate: step 4/4. Its function is as follows. Catalyzes the decarboxylation of four acetate groups of uroporphyrinogen-III to yield coproporphyrinogen-III. This is Uroporphyrinogen decarboxylase from Xanthomonas oryzae pv. oryzae (strain MAFF 311018).